The chain runs to 59 residues: MSKTIKVTQTKSSIGRLPKHVLCLKGLGLRRINHTVELEDTACVRGMINKVHYMVKIEE.

It belongs to the universal ribosomal protein uL30 family. Part of the 50S ribosomal subunit.

The sequence is that of Large ribosomal subunit protein uL30 from Aliivibrio salmonicida (strain LFI1238) (Vibrio salmonicida (strain LFI1238)).